Here is an 820-residue protein sequence, read N- to C-terminus: MERRLILWLDEISKDLLPLVGGKAAGLGEMIKAGIPVPPGFVVTSEAYRRFVFETGIAGFIKHILEETIVSGRPEEYEKASELIRSKFVRTPMPPYLRRAIVDAYRKLGTLVGVEEPRVAVRSSATVEDLPEASFAGQQETYLNVKGEEEVVEKVKTAWASLWTARALSYRDSLNIDHETALMAVVVQKMVSSRSSGVMFTIHPVTGEEDKIVIESIWGLGEYIVGGKVTPDRFVVSKSDLEILEVRISRKDKALFYDPDLNENVEIKIPESGEELEDLRRKHPAVAEVVEKYGIRPDAPSLSEKEVKELARLAIKVENHFARPMDIEWAIDFELSPPENILLLQARPETVWSRKKEEAEAKPPEEEAVPEGEVLVRGVPASPGVASGRVKVALTVEEAAKKMEKGDVLVTKMTDPDWVPYMKMASAIVTDEGGMTAHAAIVARELGIPAVVGTGDATKKLKDGMLVTVDGSRGVVYAGAVKTEEAREEEARPELGAAVAEVLSEVYPVTATKIYMNLGHPEEIDRYKHLPFEGIGLMRIEFIISSWIGYHPMYLIEQGRGVYFIDKLAEGVAKVASAIYPRPVVVRFSDFKTNEYRRLKGGEKYETLDERNPMIGWRGVSRYIHPNYEPAFRLEVRAIKKVREEWGLKNVWVMFPFVRTTWELERALKIMEEEGLSRGRDFKVWIMVEVPSTVFLADEFAKMVDGFSIGSNDLTQLVLGVDRDSGFLAKMGYFDERDPAVLRSIEILIEKAHSQGATVSICGQGPSVYPELVEFLVRRGIDSISVNPDAVVRVRRQVASIERRIMLERLEELGSRLSRL.

The active-site Tele-phosphohistidine intermediate is His438. Substrate is bound by residues Arg539, Arg587, Glu689, Gly710, Ser711, Asn712, and Asp713. Glu689 is a binding site for Mg(2+). Asp713 lines the Mg(2+) pocket. The active-site Proton donor is the Cys762.

This sequence belongs to the PEP-utilizing enzyme family. It depends on Mg(2+) as a cofactor.

The enzyme catalyses pyruvate + ATP + H2O = phosphoenolpyruvate + AMP + phosphate + 2 H(+). It participates in carbohydrate biosynthesis; gluconeogenesis. Catalyzes the phosphorylation of pyruvate to phosphoenolpyruvate. In Aeropyrum pernix (strain ATCC 700893 / DSM 11879 / JCM 9820 / NBRC 100138 / K1), this protein is Phosphoenolpyruvate synthase (ppsA).